The chain runs to 185 residues: Elongation factor P (185 aa).

The protein belongs to the elongation factor P family.

Its subcellular location is the cytoplasm. It functions in the pathway protein biosynthesis; polypeptide chain elongation. In terms of biological role, involved in peptide bond synthesis. Stimulates efficient translation and peptide-bond synthesis on native or reconstituted 70S ribosomes in vitro. Probably functions indirectly by altering the affinity of the ribosome for aminoacyl-tRNA, thus increasing their reactivity as acceptors for peptidyl transferase. This Alkaliphilus metalliredigens (strain QYMF) protein is Elongation factor P.